We begin with the raw amino-acid sequence, 340 residues long: N-acetyl-gamma-glutamyl-phosphate reductase (340 aa).

Residue cysteine 146 is part of the active site.

Belongs to the NAGSA dehydrogenase family. Type 1 subfamily.

Its subcellular location is the cytoplasm. It carries out the reaction N-acetyl-L-glutamate 5-semialdehyde + phosphate + NADP(+) = N-acetyl-L-glutamyl 5-phosphate + NADPH + H(+). It functions in the pathway amino-acid biosynthesis; L-arginine biosynthesis; N(2)-acetyl-L-ornithine from L-glutamate: step 3/4. Catalyzes the NADPH-dependent reduction of N-acetyl-5-glutamyl phosphate to yield N-acetyl-L-glutamate 5-semialdehyde. This is N-acetyl-gamma-glutamyl-phosphate reductase from Streptococcus gordonii (strain Challis / ATCC 35105 / BCRC 15272 / CH1 / DL1 / V288).